Here is a 663-residue protein sequence, read N- to C-terminus: LEAF RUST 10 DISEASE-RESISTANCE LOCUS RECEPTOR-LIKE PROTEIN KINASE-like 1.4 (663 aa).

The N-terminal stretch at 1-25 (MYYPLSSSLMFFILFSLFYHLPCES) is a signal peptide. The Extracellular segment spans residues 26–241 (SKCESLFQCG…TSLSIGAKAG (216 aa)). Residues asparagine 36, asparagine 64, asparagine 106, asparagine 137, and asparagine 208 are each glycosylated (N-linked (GlcNAc...) asparagine). A helical membrane pass occupies residues 242–262 (IAVASVSGLAILLLAGLFLCI). Over 263–663 (RRRRKTQDAQ…TSSSDTAASL (401 aa)) the chain is Cytoplasmic. Residues 282–304 (SYSSRDTSRNPTSTTISSSSNHS) form a disordered region. Residues 290-304 (RNPTSTTISSSSNHS) show a composition bias toward low complexity. The region spanning 334–609 (ENFSRELGDG…DEIVEILRGI (276 aa)) is the Protein kinase domain. ATP contacts are provided by residues 340-348 (LGDGGFGTV) and lysine 362. Aspartate 458 serves as the catalytic Proton acceptor. The disordered stretch occupies residues 637 to 663 (LLRNSVPPPISPETDKWTSSSDTAASL). Polar residues predominate over residues 653 to 663 (WTSSSDTAASL).

Belongs to the protein kinase superfamily. Ser/Thr protein kinase family.

It localises to the cell membrane. It carries out the reaction L-seryl-[protein] + ATP = O-phospho-L-seryl-[protein] + ADP + H(+). The catalysed reaction is L-threonyl-[protein] + ATP = O-phospho-L-threonyl-[protein] + ADP + H(+). This chain is LEAF RUST 10 DISEASE-RESISTANCE LOCUS RECEPTOR-LIKE PROTEIN KINASE-like 1.4, found in Arabidopsis thaliana (Mouse-ear cress).